Consider the following 210-residue polypeptide: Probable GTP-binding protein EngB (210 aa).

In terms of domain architecture, EngB-type G spans 25–199; that stretch reads RGIEVAFAGR…RQKLDSWFSE (175 aa). GTP-binding positions include 33–40, 60–64, 78–81, 145–148, and 178–180; these read GRSNAGKS, GRTQL, DLPG, TKAD, and FSS. 2 residues coordinate Mg(2+): Ser-40 and Thr-62.

It belongs to the TRAFAC class TrmE-Era-EngA-EngB-Septin-like GTPase superfamily. EngB GTPase family. It depends on Mg(2+) as a cofactor.

Its function is as follows. Necessary for normal cell division and for the maintenance of normal septation. The protein is Probable GTP-binding protein EngB of Salmonella paratyphi B (strain ATCC BAA-1250 / SPB7).